The sequence spans 198 residues: ATP-dependent Clp protease proteolytic subunit (198 aa).

The active-site Nucleophile is Ser98. His123 is a catalytic residue.

This sequence belongs to the peptidase S14 family. Fourteen ClpP subunits assemble into 2 heptameric rings which stack back to back to give a disk-like structure with a central cavity, resembling the structure of eukaryotic proteasomes.

It localises to the cytoplasm. It carries out the reaction Hydrolysis of proteins to small peptides in the presence of ATP and magnesium. alpha-casein is the usual test substrate. In the absence of ATP, only oligopeptides shorter than five residues are hydrolyzed (such as succinyl-Leu-Tyr-|-NHMec, and Leu-Tyr-Leu-|-Tyr-Trp, in which cleavage of the -Tyr-|-Leu- and -Tyr-|-Trp bonds also occurs).. Cleaves peptides in various proteins in a process that requires ATP hydrolysis. Has a chymotrypsin-like activity. Plays a major role in the degradation of misfolded proteins. The chain is ATP-dependent Clp protease proteolytic subunit from Ehrlichia ruminantium (strain Welgevonden).